A 223-amino-acid polypeptide reads, in one-letter code: Urease accessory protein UreF (223 aa).

This sequence belongs to the UreF family. UreD, UreF and UreG form a complex that acts as a GTP-hydrolysis-dependent molecular chaperone, activating the urease apoprotein by helping to assemble the nickel containing metallocenter of UreC. The UreE protein probably delivers the nickel.

Its subcellular location is the cytoplasm. In terms of biological role, required for maturation of urease via the functional incorporation of the urease nickel metallocenter. The chain is Urease accessory protein UreF from Rhizobium leguminosarum bv. trifolii (strain WSM2304).